Consider the following 130-residue polypeptide: MAMVSEFLKQAWFMDNQEQECIKSSKGGSSVQSRPNFDPSADVSALDKAITVKGVDEATIIDILTKRTNAQRQQIKAAYQQAKGKSLEEDLKKVLKSHLEDVVVALLKTPAQFDAEELRASMKGLGTDRR.

Residue Gln19 forms an Isoglutamyl lysine isopeptide (Gln-Lys) (interchain with K-?) linkage. Ser24 is subject to Phosphoserine; by PKC. Annexin repeat units lie at residues 37–108 (FDPS…ALLK) and 109–130 (TPAQFDAEELRASMKGLGTDRR). Ca(2+) is bound by residues Gly54, Val55, Glu57, Lys92, Leu95, Glu100, Met122, Gly124, Gly126, Thr127, and Arg130.

The protein belongs to the annexin family.

It localises to the nucleus. It is found in the cytoplasm. The protein localises to the cell projection. Its subcellular location is the cilium. The protein resides in the basolateral cell membrane. It localises to the lateral cell membrane. It is found in the cell membrane. The protein localises to the apical cell membrane. Its subcellular location is the membrane. The protein resides in the early endosome. It localises to the cytoplasmic vesicle membrane. It is found in the endosome membrane. The protein localises to the secreted. Its subcellular location is the extracellular space. The protein resides in the extracellular exosome. It localises to the cytoplasmic vesicle. It is found in the secretory vesicle lumen. The protein localises to the phagocytic cup. Plays important roles in the innate immune response as effector of glucocorticoid-mediated responses and regulator of the inflammatory process. Has anti-inflammatory activity. Plays a role in glucocorticoid-mediated down-regulation of the early phase of the inflammatory response. Promotes resolution of inflammation and wound healing. Functions at least in part by activating the formyl peptide receptors and downstream signaling cascades. Promotes chemotaxis of granulocytes and monocytes via activation of the formyl peptide receptors. Contributes to the adaptive immune response by enhancing signaling cascades that are triggered by T-cell activation, regulates differentiation and proliferation of activated T-cells. Promotes the differentiation of T-cells into Th1 cells and negatively regulates differentiation into Th2 cells. Has no effect on unstimulated T-cells. Promotes rearrangement of the actin cytoskeleton, cell polarization and cell migration. Negatively regulates hormone exocytosis via activation of the formyl peptide receptors and reorganization of the actin cytoskeleton. Has high affinity for Ca(2+) and can bind up to eight Ca(2+) ions. Displays Ca(2+)-dependent binding to phospholipid membranes. Plays a role in the formation of phagocytic cups and phagosomes. Plays a role in phagocytosis by mediating the Ca(2+)-dependent interaction between phagosomes and the actin cytoskeleton. The polypeptide is Annexin A1 (ANXA1) (Gallus gallus (Chicken)).